We begin with the raw amino-acid sequence, 971 residues long: UPF0182 protein CMS1887 (971 aa).

A run of 7 helical transmembrane segments spans residues 16–36, 56–76, 108–128, 161–181, 205–225, 255–275, and 281–301; these read LAIT…FAGF, WGAG…PVFV, LAMF…ASSG, FYHA…LGVL, IQIA…IWLD, TILA…AAIG, and IIGT…YPAI. Polar residues predominate over residues 687-702; sequence QDLWTTPNDPTATTEA. Disordered regions lie at residues 687 to 706 and 874 to 924; these read QDLW…GTPA and GATA…AQDV. Composition is skewed to low complexity over residues 884-900 and 907-921; these read PTTP…TDGA and STPT…AAPA.

The protein belongs to the UPF0182 family.

The protein localises to the cell membrane. The protein is UPF0182 protein CMS1887 of Clavibacter sepedonicus (Clavibacter michiganensis subsp. sepedonicus).